The primary structure comprises 96 residues: Protein Vpr (96 aa).

Residues 1–42 are homooligomerization; that stretch reads MEQAPEDQGPQREPYNEWTLELLEELKREAVRHFPRPWLHGL. Ser-79, Ser-94, and Ser-96 each carry phosphoserine; by host.

It belongs to the HIV-1 VPR protein family. In terms of assembly, homooligomer, may form homodimer. Interacts with p6-gag region of the Pr55 Gag precursor protein through a (Leu-X-X)4 motif near the C-terminus of the P6gag protein. Interacts with host UNG. May interact with host RAD23A/HHR23A. Interacts with host VPRBP/DCAF1, leading to hijack the CUL4A-RBX1-DDB1-DCAF1/VPRBP complex, mediating ubiquitination of host proteins such as TERT and ZGPAT and arrest of the cell cycle in G2 phase. Post-translationally, phosphorylated on several residues by host. These phosphorylations regulate VPR activity for the nuclear import of the HIV-1 pre-integration complex.

Its subcellular location is the virion. The protein localises to the host nucleus. The protein resides in the host extracellular space. During virus replication, may deplete host UNG protein, and incude G2-M cell cycle arrest. Acts by targeting specific host proteins for degradation by the 26S proteasome, through association with the cellular CUL4A-DDB1 E3 ligase complex by direct interaction with host VPRPB/DCAF-1. Cell cycle arrest reportedly occurs within hours of infection and is not blocked by antiviral agents, suggesting that it is initiated by the VPR carried into the virion. Additionally, VPR induces apoptosis in a cell cycle dependent manner suggesting that these two effects are mechanistically linked. Detected in the serum and cerebrospinal fluid of AIDS patient, VPR may also induce cell death to bystander cells. In terms of biological role, during virus entry, plays a role in the transport of the viral pre-integration (PIC) complex to the host nucleus. This function is crucial for viral infection of non-dividing macrophages. May act directly at the nuclear pore complex, by binding nucleoporins phenylalanine-glycine (FG)-repeat regions. The protein is Protein Vpr of Human immunodeficiency virus type 1 group M subtype C (isolate 92BR025) (HIV-1).